Here is a 149-residue protein sequence, read N- to C-terminus: Ribosome-binding factor A (149 aa).

The segment at 124–149 (AKLREGAVPAGDADPYKTSSKSESEE) is disordered.

This sequence belongs to the RbfA family. Monomer. Binds 30S ribosomal subunits, but not 50S ribosomal subunits or 70S ribosomes.

Its subcellular location is the cytoplasm. In terms of biological role, one of several proteins that assist in the late maturation steps of the functional core of the 30S ribosomal subunit. Associates with free 30S ribosomal subunits (but not with 30S subunits that are part of 70S ribosomes or polysomes). Required for efficient processing of 16S rRNA. May interact with the 5'-terminal helix region of 16S rRNA. The polypeptide is Ribosome-binding factor A (Corynebacterium glutamicum (strain R)).